The sequence spans 222 residues: Glutathione S-transferase alpha-1 (222 aa).

Position 1 is an N-acetylmethionine (methionine 1). One can recognise a GST N-terminal domain in the interval glycine 3 to glycine 83. At lysine 4 the chain carries N6-succinyllysine. Residues tyrosine 9, lysine 45, glutamine 54–valine 55, and glutamine 67–threonine 68 contribute to the glutathione site. The GST C-terminal domain occupies aspartate 85–valine 208.

The protein belongs to the GST superfamily. Alpha family. Homodimer. Homodimer or heterodimer of GSTA1 and GSTA2.

Its subcellular location is the cytoplasm. The enzyme catalyses RX + glutathione = an S-substituted glutathione + a halide anion + H(+). The catalysed reaction is prostaglandin A2 + glutathione = prostaglandin A2-S-(R)-glutathione. It catalyses the reaction prostaglandin J2 + glutathione = prostaglandin J2-S-(R)-glutathione. It carries out the reaction (13S)-hydroperoxy-(9Z,11E)-octadecadienoate + 2 glutathione = (13S)-hydroxy-(9Z,11E)-octadecadienoate + glutathione disulfide + H2O. The enzyme catalyses androst-5-ene-3,17-dione = androst-4-ene-3,17-dione. In terms of biological role, glutathione S-transferase that catalyzes the nucleophilic attack of the sulfur atom of glutathione on the electrophilic groups of a wide range of exogenous and endogenous compounds. Involved in the formation of glutathione conjugates of both prostaglandin A2 (PGA2) and prostaglandin J2 (PGJ2). It also catalyzes the isomerization of D5-androstene-3,17-dione (AD) into D4-androstene-3,17-dione and may therefore play an important role in hormone biosynthesis. Through its glutathione-dependent peroxidase activity toward the fatty acid hydroperoxide (13S)-hydroperoxy-(9Z,11E)-octadecadienoate/13-HPODE it is also involved in the metabolism of oxidized linoleic acid. In Rattus norvegicus (Rat), this protein is Glutathione S-transferase alpha-1 (Gsta1).